The chain runs to 503 residues: MTLGSPRKGLLMLLMALVTQGDPVKPSRGPLVTCTCESPHCKGPTCRGAWCTVVLVREEGRHPQEHRGCGNLHRELCRGRPTEFVNHYCCDSHLCNHNVSLVLEATQPPSEQPGTDGQLALILGPVLALLALVALGVLGLWHVRRRQEKQRGLHSELGESSLILKASEQGDSMLGDLLDSDCTTGSGSGLPFLVQRTVARQVALVECVGKGRYGEVWRGLWHGESVAVKIFSSRDEQSWFRETEIYNTVLLRHDNILGFIASDMTSRNSSTQLWLITHYHEHGSLYDFLQRQTLEPHLALRLAVSAACGLAHLHVEIFGTQGKPAIAHRDFKSRNVLVKSNLQCCIADLGLAVMHSQGSDYLDIGNNPRVGTKRYMAPEVLDEQIRTDCFESYKWTDIWAFGLVLWEIARRTIVNGIVEDYRPPFYDVVPNDPSFEDMKKVVCVDQQTPTIPNRLAADPVLSGLAQMMRECWYPNPSARLTALRIKKTLQKISNSPEKPKVIQ.

Positions 1–21 (MTLGSPRKGLLMLLMALVTQG) are cleaved as a signal peptide. Over 22–118 (DPVKPSRGPL…PSEQPGTDGQ (97 aa)) the chain is Extracellular. 3 disulfide bridges follow: C34-C51, C36-C41, and C46-C69. Positions 73–76 (HREL) are mediates specificity for BMP ligand. 2 disulfide bridges follow: C77-C89 and C90-C95. The N-linked (GlcNAc...) asparagine glycan is linked to N98. Residues 119–141 (LALILGPVLALLALVALGVLGLW) traverse the membrane as a helical segment. Topologically, residues 142–503 (HVRRRQEKQR…NSPEKPKVIQ (362 aa)) are cytoplasmic. S155, S160, and S161 each carry phosphoserine. A GS domain is found at 172-201 (SMLGDLLDSDCTTGSGSGLPFLVQRTVARQ). The Protein kinase domain occupies 202 to 492 (VALVECVGKG…LRIKKTLQKI (291 aa)). ATP contacts are provided by residues 208 to 216 (VGKGRYGEV) and K229. D330 (proton acceptor) is an active-site residue.

It belongs to the protein kinase superfamily. TKL Ser/Thr protein kinase family. TGFB receptor subfamily. Interacts with TSC22D1/TSC-22. It depends on Mg(2+) as a cofactor. The cofactor is Mn(2+).

It localises to the cell membrane. The enzyme catalyses L-threonyl-[receptor-protein] + ATP = O-phospho-L-threonyl-[receptor-protein] + ADP + H(+). It catalyses the reaction L-seryl-[receptor-protein] + ATP = O-phospho-L-seryl-[receptor-protein] + ADP + H(+). Type I receptor for TGF-beta family ligands BMP9/GDF2 and BMP10 and important regulator of normal blood vessel development. On ligand binding, forms a receptor complex consisting of two type II and two type I transmembrane serine/threonine kinases. Type II receptors phosphorylate and activate type I receptors which autophosphorylate, then bind and activate SMAD transcriptional regulators. May bind activin as well. The polypeptide is Activin receptor type-1-like (ACVRL1) (Homo sapiens (Human)).